Reading from the N-terminus, the 238-residue chain is Probable transcriptional regulatory protein SSU98_0387 (238 aa).

This sequence belongs to the TACO1 family. YeeN subfamily.

It is found in the cytoplasm. In Streptococcus suis (strain 98HAH33), this protein is Probable transcriptional regulatory protein SSU98_0387.